The chain runs to 952 residues: Disintegrin and metalloproteinase domain-containing protein adm-2 (952 aa).

Residues 1-672 (MTDTLDLKLS…NEAYRFRGIT (672 aa)) are Extracellular-facing. Residues asparagine 125 and asparagine 301 are each glycosylated (N-linked (GlcNAc...) asparagine). One can recognise a Peptidase M12B domain in the interval 177–373 (RFVELALVAD…GIDLCLFNEP (197 aa)). Intrachain disulfides connect cysteine 287–cysteine 368, cysteine 330–cysteine 352, and cysteine 332–cysteine 337. Histidine 312 serves as a coordination point for Zn(2+). Residue glutamate 313 is part of the active site. Residues histidine 316 and histidine 322 each contribute to the Zn(2+) site. The Disintegrin domain maps to 379–466 (DAKCGNGIVE…DCPADFFVQN (88 aa)). N-linked (GlcNAc...) asparagine glycosylation is present at asparagine 406. 4 disulfides stabilise this stretch: cysteine 438/cysteine 458, cysteine 624/cysteine 634, cysteine 628/cysteine 640, and cysteine 642/cysteine 651. Residues 620–652 (VTAQCLDNCNFRGVCNNVGNCHCERGFGGIACE) form the EGF-like domain. Residues 673–693 (LSSTFLVFFCLFGIFIGGLCV) traverse the membrane as a helical segment. The Cytoplasmic portion of the chain corresponds to 694–952 (YYRVKRKRNL…AAIFDQKLKK (259 aa)). Disordered regions lie at residues 778–809 (IPMVTLKNPNLASPTPLLNPAEKEEQNQERAT) and 829–938 (SFNT…EKVD). 2 stretches are compositionally biased toward basic and acidic residues: residues 798–809 (AEKEEQNQERAT) and 849–873 (PSDDVLSKLNEDLAKEKNAKFDRLN). The segment covering 905–914 (QAPPPPPPAH) has biased composition (pro residues). Basic and acidic residues predominate over residues 925–938 (KVSEDAAATEEKVD).

Requires Zn(2+) as cofactor. Expressed in hyp7 large epidermal syncytium (punctate distribution), seam cell syncytia, anterior epidermis, neurons located in the head, tail and central body, proximal oogenic cells (levels increasing in maturing oocytes) and myoepithelial cells of the spermatheca (at protein level). Not detected in mature sperm cells.

The protein localises to the cell membrane. The protein resides in the endosome membrane. It is found in the lysosome membrane. Its function is as follows. Metalloprotease that cleaves and releases a number of molecules. Negative regulator of lrp-1 protein levels, potentially by influencing its endosomal trafficking. Involved in regulating the molting process. The protein is Disintegrin and metalloproteinase domain-containing protein adm-2 of Caenorhabditis elegans.